The following is a 415-amino-acid chain: Hydroxysteroid dehydrogenase-like protein 2 (415 aa).

NADP(+)-binding positions include 17–23, Lys-42, and Asp-74; that span reads GASRGIG. The Proton acceptor role is filled by Tyr-168. NADP(+) is bound at residue Lys-172. An SCP2 domain is found at 304 to 412; the sequence is AGPVSEMFNT…KLEKMMAMMK (109 aa).

It belongs to the short-chain dehydrogenases/reductases (SDR) family.

Its subcellular location is the peroxisome. The protein localises to the mitochondrion. In terms of biological role, has apparently no steroid dehydrogenase activity. Might act as a metabolic regulator that affects systemic adaptation to nutritional cues. In Danio rerio (Zebrafish), this protein is Hydroxysteroid dehydrogenase-like protein 2 (hsdl2).